The chain runs to 38 residues: Photosystem II reaction center protein L (38 aa).

A helical transmembrane segment spans residues 17 to 37 (SLFWGLLLIFVLAILFSNYFF).

This sequence belongs to the PsbL family. PSII is composed of 1 copy each of membrane proteins PsbA, PsbB, PsbC, PsbD, PsbE, PsbF, PsbH, PsbI, PsbJ, PsbK, PsbL, PsbM, PsbT, PsbX, PsbY, PsbZ, Psb30/Ycf12, at least 3 peripheral proteins of the oxygen-evolving complex and a large number of cofactors. It forms dimeric complexes.

The protein resides in the plastid. Its subcellular location is the chloroplast thylakoid membrane. Functionally, one of the components of the core complex of photosystem II (PSII). PSII is a light-driven water:plastoquinone oxidoreductase that uses light energy to abstract electrons from H(2)O, generating O(2) and a proton gradient subsequently used for ATP formation. It consists of a core antenna complex that captures photons, and an electron transfer chain that converts photonic excitation into a charge separation. This subunit is found at the monomer-monomer interface and is required for correct PSII assembly and/or dimerization. The protein is Photosystem II reaction center protein L of Chara vulgaris (Common stonewort).